Consider the following 211-residue polypeptide: Peptidyl-prolyl cis-trans isomerase-like 3 (211 aa).

One can recognise a PPIase cyclophilin-type domain in the interval 1–204; that stretch reads MSVTLHTTHG…ETLRINRVTI (204 aa).

Belongs to the cyclophilin-type PPIase family. PPIL3 subfamily.

It catalyses the reaction [protein]-peptidylproline (omega=180) = [protein]-peptidylproline (omega=0). PPIases accelerate the folding of proteins. It catalyzes the cis-trans isomerization of proline imidic peptide bonds in oligopeptides. The sequence is that of Peptidyl-prolyl cis-trans isomerase-like 3 (cyp10) from Emericella nidulans (strain FGSC A4 / ATCC 38163 / CBS 112.46 / NRRL 194 / M139) (Aspergillus nidulans).